We begin with the raw amino-acid sequence, 94 residues long: MTIYVGNLSYRATEADLKAVFADYGEVKRVVLPTDRETGRMRGFAFVEMNEDAQEDAAITELDGAEWMGRQLRVNKAKPREDDRRGSWGKKQDY.

In terms of domain architecture, RRM spans 2-79 (TIYVGNLSYR…RQLRVNKAKP (78 aa)). The segment at 73–94 (RVNKAKPREDDRRGSWGKKQDY) is disordered. Positions 78–94 (KPREDDRRGSWGKKQDY) are enriched in basic and acidic residues.

The chain is Putative RNA-binding protein RbpD (rbpD) from Nostoc sp. (strain PCC 7120 / SAG 25.82 / UTEX 2576).